We begin with the raw amino-acid sequence, 309 residues long: Probable sugar phosphate/phosphate translocator At5g05820 (309 aa).

The next 10 membrane-spanning stretches (helical) occupy residues 9-29 (FFTI…LLLN), 42-62 (IFLT…AIAW), 77-97 (FFKI…GNIS), 100-120 (FLPV…TAVF), 130-150 (AWLT…ASGG), 154-174 (FHLF…LKSV), 192-212 (LLLY…LIME), 229-249 (IVWY…TNFL), 256-278 (ALTL…ILIF), and 282-301 (VSVT…ILYS). An EamA domain is found at 30–147 (KYLLSNYGFK…VPVVTGVVIA (118 aa)).

It belongs to the TPT transporter family. TPT (TC 2.A.7.9) subfamily.

It is found in the membrane. This Arabidopsis thaliana (Mouse-ear cress) protein is Probable sugar phosphate/phosphate translocator At5g05820.